We begin with the raw amino-acid sequence, 554 residues long: Arginine--tRNA ligase (554 aa).

The 'HIGH' region signature appears at 129-139 (ANPTGPLHIGH).

It belongs to the class-I aminoacyl-tRNA synthetase family. Monomer.

It is found in the cytoplasm. It catalyses the reaction tRNA(Arg) + L-arginine + ATP = L-arginyl-tRNA(Arg) + AMP + diphosphate. This is Arginine--tRNA ligase from Citrifermentans bemidjiense (strain ATCC BAA-1014 / DSM 16622 / JCM 12645 / Bem) (Geobacter bemidjiensis).